The following is a 1062-amino-acid chain: Probable sucrose-phosphate synthase 3 (1062 aa).

Over residues 113–122 (EREQGRRDAT) the composition is skewed to basic and acidic residues. Residues 113–141 (EREQGRRDATEDLSEDLSEGEKGDGLGEI) form a disordered region. A phosphoserine mark is found at Ser126, Ser130, and Ser156. The segment at 715 to 735 (MDGDKPSLNGSLEPNSADPVK) is disordered.

This sequence belongs to the glycosyltransferase 1 family. As to quaternary structure, homodimer or homotetramer.

It carries out the reaction beta-D-fructose 6-phosphate + UDP-alpha-D-glucose = sucrose 6(F)-phosphate + UDP + H(+). It functions in the pathway glycan biosynthesis; sucrose biosynthesis; sucrose from D-fructose 6-phosphate and UDP-alpha-D-glucose: step 1/2. With respect to regulation, activity is regulated by phosphorylation and moderated by concentration of metabolites and light. Its function is as follows. Plays a role in photosynthetic sucrose synthesis by catalyzing the rate-limiting step of sucrose biosynthesis from UDP-glucose and fructose- 6-phosphate. Involved in the regulation of carbon partitioning in the leaves of plants. May regulate the synthesis of sucrose and therefore play a major role as a limiting factor in the export of photoassimilates out of the leaf. Plays a role for sucrose availability that is essential for plant growth and fiber elongation. The sequence is that of Probable sucrose-phosphate synthase 3 (SPS3) from Arabidopsis thaliana (Mouse-ear cress).